Reading from the N-terminus, the 218-residue chain is DNA ADP-ribosyl transferase (218 aa).

A DarT domain is found at 14–217 (ALIWRIVHRD…SVHTRSGWYF (204 aa)). NAD(+) is bound by residues 18–20 (RIV) and R57. Positions 41–59 (QAENWINIGNPELIGKRAG) are NAD(+)-binding element. The active-site Proton acceptor is R57. The segment at 123 to 170 (TDSHAYYNWTNYYTSLNSLDQIDWPILQARDFRRDPDDPAKFERYQAE) is ADP-ribosylating turn-turn loop. Residue E170 is part of the active site.

It belongs to the DarT ADP-ribosyltransferase family. Interacts with cognate antitoxin DarG (via C-terminus); this heterodimeric complex neutralizes the toxic effect of DarT by preventing ssDNA binding to DarT and consequently inactivating the toxin by direct protein-protein interactions.

The enzyme catalyses a thymidine in DNA + NAD(+) = an N-(ADP-alpha-D-ribosyl)-thymidine in DNA + nicotinamide + H(+). Toxic component of the hybrid type II/IV toxin-antitoxin (TA) system DarTG, which plays a crucial role in controlling bacterial growth and bacteriophage infection. ADP-ribosylates ssDNA in the sequence TTT/TCT. In case of phage infection, DarT toxin ADP-ribosylates DNA, which inhibits both viral DNA and RNA synthesis and leads to abortive infection. Its toxic effect is neutralized by cognate antitoxin DarG. May target ssDNA loops during DNA replication, probably modifies thymidine. Wild-type protein cannot be expressed at low levels in the absence of its cognate antitoxin, but a mutant protein (G49D) can be expressed, which slows growth, rapidly inhibits DNA replication, and induces RecA expression and the SOS response. The slow growth phenotype can be suppressed by cognate antitoxin DarG. Has no activity on dsDNA in vitro. In vivo ADP-ribosylates genomic DNA (gDNA). Genetic data strongly suggests ADP-ribosylation by DarT probably generates ssDNA gaps that are repaired by the RecFOR-mediated homologous recombination pathway (RuvAB, RecG) and resolved by RuvC. In some cases these gaps probably migrate into dsDNA, where they are resolved by nucleotide excision repair (NER) detected by UvrAB, excised by UvrC, removed by UvrD, and repaired by Pol I and ligase. Other pathways may also be involved in ADP-ribosylation removal from DNA. The protein is DNA ADP-ribosyl transferase of Escherichia coli O127:H6 (strain E2348/69 / EPEC).